A 251-amino-acid chain; its full sequence is Azurocidin (251 aa).

The signal sequence occupies residues 1–19 (MTRLTVLALLAGLLASSRA). Residues 20 to 26 (GSSPLLD) constitute a propeptide, removed in mature form. The propeptide at 25-26 (LD) is dipeptide found in non-mature form. Residues 27 to 244 (IVGGRKARPR…FRDWIDGVLN (218 aa)) form the Peptidase S1 domain. The interval 46 to 70 (NQGRHFCGGALIHARFVMTAASCFQ) is possesses antibiotic activity. Cysteines 52 and 68 form a disulfide. A glycan (N-linked (GlcNAc...) asparagine; partial) is linked at Asn126. N-linked (GlcNAc...) asparagine glycosylation occurs at Asn140. Intrachain disulfides connect Cys149-Cys207, Cys180-Cys186, and Cys197-Cys222. Asn171 is a glycosylation site (N-linked (GlcNAc...) asparagine; partial). A propeptide spans 249-251 (GPA) (removed in mature form).

Belongs to the peptidase S1 family. Elastase subfamily. In terms of processing, cleavage of the N-terminal propeptide which is composed of 7 amino acids occurs in two steps. The initial cleavage of 5 amino acids is followed by the cleavage of a dipeptide to produce the mature form.

Its subcellular location is the cytoplasmic granule membrane. Its function is as follows. This is a neutrophil granule-derived antibacterial and monocyte- and fibroblast-specific chemotactic glycoprotein. Binds heparin. The cytotoxic action is limited to many species of Gram-negative bacteria; this specificity may be explained by a strong affinity of the very basic N-terminal half for the negatively charged lipopolysaccharides that are unique to the Gram-negative bacterial outer envelope. It may play a role in mediating recruitment of monocytes in the second wave of inflammation. Has antibacterial activity against the Gram-negative bacterium P.aeruginosa, this activity is inhibited by LPS from P.aeruginosa. Acting alone, it does not have antimicrobial activity against the Gram-negative bacteria A.actinomycetemcomitans ATCC 29532, A.actinomycetemcomitans NCTC 9709, A.actinomycetemcomitans FDC-Y4, H.aphrophilus ATCC 13252, E.corrodens ATCC 23834, C.sputigena ATCC 33123, Capnocytophaga sp ATCC 33124, Capnocytophaga sp ATCC 27872 or E.coli ML-35. Has antibacterial activity against C.sputigena ATCC 33123 when acting synergistically with either elastase or cathepsin G. This is Azurocidin from Homo sapiens (Human).